The chain runs to 142 residues: Cellulose/chitin binding protein BQ2027_MB2009 (142 aa).

Positions 1–37 (MAGLNIYVRRWRTALHATVSALIVAILGLAITPVASA) are cleaved as a signal peptide. The 105-residue stretch at 38 to 142 (ATARATLSVT…CLLNGQYPCT (105 aa)) folds into the CBM2 domain.

Its subcellular location is the secreted. It is found in the cell wall. It localises to the cell membrane. In terms of biological role, carbohydrate binding protein that binds chitin and cellulose. Lacks enzymatic activity and does not hydrolyze chitin and cellulose. May interact with mycobacterial biofilms, which are rich in cellulose, and play a role in biofilm formation. Could also act as an adhesin, improving the initial attachment to host cells and aiding M.bovis during the initial stages of infection. Functionally, may act as a virulence factor that modulates host immune responses and contributes to host immune evasion. The sequence is that of Cellulose/chitin binding protein BQ2027_MB2009 from Mycobacterium bovis (strain ATCC BAA-935 / AF2122/97).